Consider the following 296-residue polypeptide: Probable porphobilinogen deaminase (296 aa).

Cysteine 241 carries the post-translational modification S-(dipyrrolylmethanemethyl)cysteine.

This sequence belongs to the HMBS family. Dipyrromethane serves as cofactor.

The enzyme catalyses 4 porphobilinogen + H2O = hydroxymethylbilane + 4 NH4(+). The protein operates within porphyrin-containing compound metabolism; protoporphyrin-IX biosynthesis; coproporphyrinogen-III from 5-aminolevulinate: step 2/4. Functionally, tetrapolymerization of the monopyrrole PBG into the hydroxymethylbilane pre-uroporphyrinogen in several discrete steps. The sequence is that of Probable porphobilinogen deaminase from Pyrobaculum neutrophilum (strain DSM 2338 / JCM 9278 / NBRC 100436 / V24Sta) (Thermoproteus neutrophilus).